Consider the following 2035-residue polypeptide: Ral GTPase-activating protein subunit alpha-1 (2035 aa).

Disordered regions lie at residues 343-384 and 477-496; these read LVSR…SSLC and DGEK…VRNS. Over residues 345 to 365 the composition is skewed to basic and acidic residues; it reads SREESKNDTVDKVDKSAEPEQ. Polar residues-rich tracts occupy residues 366 to 384 and 486 to 496; these read SHSN…SSLC and GTSTSEHVRNS. Residues serine 710 and serine 720 each carry the phosphoserine modification. The tract at residues 714 to 752 is disordered; that stretch reads SFSRGWSRDQPGQAPMRQRSATTTGSPGTEKARSIVRQK. Position 753 is a phosphothreonine (threonine 753). Serine 772 carries the phosphoserine modification. Threonine 777 carries the phosphothreonine modification. Serine 796 carries the post-translational modification Phosphoserine. The span at 807 to 817 shows a compositional bias: basic and acidic residues; that stretch reads ERAKVNKEDTS. Disordered regions lie at residues 807 to 834 and 848 to 911; these read ERAK…SANV and SGNA…SHSD. Composition is skewed to polar residues over residues 824-833 and 849-862; these read NSETGGNSAN and GNAS…SSPG. 3 positions are modified to phosphoserine: serine 859, serine 860, and serine 863. The span at 894–911 shows a compositional bias: low complexity; it reads SPASAGSSDLMSSDSHSD. 4 positions are modified to phosphoserine: serine 985, serine 989, serine 993, and serine 999. The span at 986–1008 shows a compositional bias: polar residues; that stretch reads ESASPVHSALGSRSQTPSPSTLS. A disordered region spans residues 986 to 1011; sequence ESASPVHSALGSRSQTPSPSTLSRAH. Threonine 1001 bears the Phosphothreonine mark. 2 positions are modified to phosphoserine: serine 1003 and serine 1477. Residues 1326–2035 are minimal domain that binds to TCF3/E12; sequence FTNKTVAHVA…YHHFPADADH (710 aa). The stretch at 1713–1748 forms a coiled coil; that stretch reads SEKQENDVINAILKQYTEEKEFVEKHFNDLNMKASE. A Rap-GAP domain is found at 1795–2003; the sequence is LRNLDSRQCR…EERARYLQTI (209 aa).

In terms of assembly, component of the heterodimeric RalGAP1 complex with RALGAPB. Heterodimerization is required for activity. Interacts with the HLH region of TCF3/isoform E12. As to expression, expressed during embryogenesis. Expressed in the adult brain, particularly in neurons of the cortex and hippocampus.

It localises to the cytoplasm. The protein localises to the nucleus. Functionally, catalytic subunit of the heterodimeric RalGAP1 complex which acts as a GTPase activator for the Ras-like small GTPases RALA and RALB. May interact with the HLH region of TCF3/isoform E12. The chain is Ral GTPase-activating protein subunit alpha-1 (Ralgapa1) from Mus musculus (Mouse).